A 206-amino-acid polypeptide reads, in one-letter code: Imidazole glycerol phosphate synthase subunit HisH (206 aa).

The Glutamine amidotransferase type-1 domain maps to 1–206 (MIVIIDYGMG…LRILKNFGDM (206 aa)). Cys-79 (nucleophile) is an active-site residue. Catalysis depends on residues His-188 and Glu-190.

In terms of assembly, heterodimer of HisH and HisF.

It localises to the cytoplasm. The enzyme catalyses 5-[(5-phospho-1-deoxy-D-ribulos-1-ylimino)methylamino]-1-(5-phospho-beta-D-ribosyl)imidazole-4-carboxamide + L-glutamine = D-erythro-1-(imidazol-4-yl)glycerol 3-phosphate + 5-amino-1-(5-phospho-beta-D-ribosyl)imidazole-4-carboxamide + L-glutamate + H(+). It catalyses the reaction L-glutamine + H2O = L-glutamate + NH4(+). It participates in amino-acid biosynthesis; L-histidine biosynthesis; L-histidine from 5-phospho-alpha-D-ribose 1-diphosphate: step 5/9. IGPS catalyzes the conversion of PRFAR and glutamine to IGP, AICAR and glutamate. The HisH subunit catalyzes the hydrolysis of glutamine to glutamate and ammonia as part of the synthesis of IGP and AICAR. The resulting ammonia molecule is channeled to the active site of HisF. The sequence is that of Imidazole glycerol phosphate synthase subunit HisH from Syntrophotalea carbinolica (strain DSM 2380 / NBRC 103641 / GraBd1) (Pelobacter carbinolicus).